The primary structure comprises 244 residues: tRNA (guanine-N(1)-)-methyltransferase (244 aa).

S-adenosyl-L-methionine is bound by residues glycine 110 and isoleucine 129–leucine 134.

The protein belongs to the RNA methyltransferase TrmD family. As to quaternary structure, homodimer.

It is found in the cytoplasm. The catalysed reaction is guanosine(37) in tRNA + S-adenosyl-L-methionine = N(1)-methylguanosine(37) in tRNA + S-adenosyl-L-homocysteine + H(+). Specifically methylates guanosine-37 in various tRNAs. The protein is tRNA (guanine-N(1)-)-methyltransferase of Syntrophomonas wolfei subsp. wolfei (strain DSM 2245B / Goettingen).